Consider the following 361-residue polypeptide: Mitogen-activated protein kinase 14 (361 aa).

The Protein kinase domain occupies 25–309 (YQNLTPVGSG…AAEALAHSYF (285 aa)). Residues 31-39 (VGSGAYGSV) and Lys-54 contribute to the ATP site. Asp-151 (proton acceptor) is an active-site residue. Position 181 is a phosphothreonine (Thr-181). Positions 181 to 183 (TGY) match the TXY motif. Phosphotyrosine is present on Tyr-183.

The protein belongs to the protein kinase superfamily. CMGC Ser/Thr protein kinase family. MAP kinase subfamily. Mg(2+) serves as cofactor. Post-translationally, dually phosphorylated on Thr-181 and Tyr-183, which activates the enzyme.

The enzyme catalyses L-seryl-[protein] + ATP = O-phospho-L-seryl-[protein] + ADP + H(+). It carries out the reaction L-threonyl-[protein] + ATP = O-phospho-L-threonyl-[protein] + ADP + H(+). Its activity is regulated as follows. Activated by tyrosine and threonine phosphorylation. Functionally, serine/threonine kinase which acts as an essential component of the MAP kinase signal transduction pathway. mapk14a is one of the four p38 MAPKs which play an important role in the cascades of cellular responses evoked by extracellular stimuli such as pro-inflammatory cytokines or physical stress leading to direct activation of transcription factors. Accordingly, p38 MAPKs phosphorylate a broad range of proteins and it has been estimated that they may have approximately 200 to 300 substrates each. Some of the targets are downstream kinases which are activated through phosphorylation and further phosphorylate additional targets. MPK2 is activated by upstream MAPKK/MAPKKK and stimulates MAPKAP kinase 2 to phosphorylate small heat shock proteins. Does not phosphorylate myelin basic protein or MAPKAP kinase 1. This is Mitogen-activated protein kinase 14 (mapk14) from Xenopus laevis (African clawed frog).